Reading from the N-terminus, the 304-residue chain is HPr kinase/phosphorylase (304 aa).

Residues H136 and K157 contribute to the active site. 151 to 158 (GESGIGKS) contributes to the ATP binding site. A Mg(2+)-binding site is contributed by S158. The active-site Proton acceptor; for phosphorylation activity. Proton donor; for dephosphorylation activity is the D175. The important for the catalytic mechanism of both phosphorylation and dephosphorylation stretch occupies residues 198-207 (LEVRGMGIID). E199 provides a ligand contact to Mg(2+). The active site involves R240. Residues 261-266 (PIRPGR) form an important for the catalytic mechanism of dephosphorylation region.

Belongs to the HPrK/P family. As to quaternary structure, homohexamer. Mg(2+) serves as cofactor.

The catalysed reaction is [HPr protein]-L-serine + ATP = [HPr protein]-O-phospho-L-serine + ADP + H(+). It catalyses the reaction [HPr protein]-O-phospho-L-serine + phosphate + H(+) = [HPr protein]-L-serine + diphosphate. Functionally, catalyzes the ATP- as well as the pyrophosphate-dependent phosphorylation of a specific serine residue in HPr, a phosphocarrier protein of the phosphoenolpyruvate-dependent sugar phosphotransferase system (PTS). HprK/P also catalyzes the pyrophosphate-producing, inorganic phosphate-dependent dephosphorylation (phosphorolysis) of seryl-phosphorylated HPr (P-Ser-HPr). The two antagonistic activities of HprK/P are regulated by several intracellular metabolites, which change their concentration in response to the absence or presence of rapidly metabolisable carbon sources (glucose, fructose, etc.) in the growth medium. Therefore, by controlling the phosphorylation state of HPr, HPrK/P is a sensor enzyme that plays a major role in the regulation of carbon metabolism and sugar transport: it mediates carbon catabolite repression (CCR), and regulates PTS-catalyzed carbohydrate uptake and inducer exclusion. The chain is HPr kinase/phosphorylase from Clostridium acetobutylicum (strain ATCC 824 / DSM 792 / JCM 1419 / IAM 19013 / LMG 5710 / NBRC 13948 / NRRL B-527 / VKM B-1787 / 2291 / W).